We begin with the raw amino-acid sequence, 431 residues long: Trigger factor (431 aa).

In terms of domain architecture, PPIase FKBP-type spans 158–243; the sequence is GHLVALETWS…VIEVSEPVLL (86 aa).

This sequence belongs to the FKBP-type PPIase family. Tig subfamily.

The protein localises to the cytoplasm. The enzyme catalyses [protein]-peptidylproline (omega=180) = [protein]-peptidylproline (omega=0). Involved in protein export. Acts as a chaperone by maintaining the newly synthesized protein in an open conformation. Functions as a peptidyl-prolyl cis-trans isomerase. In Xylella fastidiosa (strain 9a5c), this protein is Trigger factor (tig).